The following is a 521-amino-acid chain: Probable tRNA (uracil-O(2)-)-methyltransferase (521 aa).

Belongs to the TRM44 family.

The protein localises to the cytoplasm. The enzyme catalyses uridine(44) in tRNA(Ser) + S-adenosyl-L-methionine = 2'-O-methyluridine(44) in tRNA(Ser) + S-adenosyl-L-homocysteine + H(+). Functionally, probable adenosyl-L-methionine (AdoMet)-dependent tRNA (uracil-O(2)-)-methyltransferase. The protein is Probable tRNA (uracil-O(2)-)-methyltransferase (trmt44) of Drosophila melanogaster (Fruit fly).